We begin with the raw amino-acid sequence, 312 residues long: 4-diphosphocytidyl-2-C-methyl-D-erythritol kinase (312 aa).

The active site involves Lys18. 104 to 114 (PIAGGMGGGSA) is a binding site for ATP. Residue Asp146 is part of the active site.

It belongs to the GHMP kinase family. IspE subfamily.

It catalyses the reaction 4-CDP-2-C-methyl-D-erythritol + ATP = 4-CDP-2-C-methyl-D-erythritol 2-phosphate + ADP + H(+). Its pathway is isoprenoid biosynthesis; isopentenyl diphosphate biosynthesis via DXP pathway; isopentenyl diphosphate from 1-deoxy-D-xylulose 5-phosphate: step 3/6. Functionally, catalyzes the phosphorylation of the position 2 hydroxy group of 4-diphosphocytidyl-2C-methyl-D-erythritol. This chain is 4-diphosphocytidyl-2-C-methyl-D-erythritol kinase, found in Clavibacter michiganensis subsp. michiganensis (strain NCPPB 382).